Consider the following 346-residue polypeptide: Dimethylallyltranstransferase (346 aa).

Isopentenyl diphosphate is bound by residues Lys96, Arg99, and His128. Mg(2+)-binding residues include Asp135 and Asp141. Arg147 contacts isopentenyl diphosphate.

Belongs to the FPP/GGPP synthase family. Mg(2+) serves as cofactor.

It catalyses the reaction isopentenyl diphosphate + dimethylallyl diphosphate = (2E)-geranyl diphosphate + diphosphate. The protein operates within isoprenoid biosynthesis; geranyl diphosphate biosynthesis; geranyl diphosphate from dimethylallyl diphosphate and isopentenyl diphosphate: step 1/1. In terms of biological role, prenyltransferase involved in the biosynthesis of ambiguines, a family of hapalindole-type alkaloids. Catalyzes the addition of isopentenyl diphosphate (IPP) onto dimethylallyl diphosphate (DMAPP) to form geranyl pyrophosphate (GPP). Cannot use farnesyl diphosphate (FPP) or geranylgeranyl diphosphate (GGPP). In Fischerella ambigua (strain UTEX 1903), this protein is Dimethylallyltranstransferase.